The chain runs to 261 residues: Lysosome-associated membrane glycoprotein 5 (261 aa).

Residues methionine 1–alanine 29 form the signal peptide. Residues glutamate 30 to glutamate 234 are Extracellular-facing. N-linked (GlcNAc...) asparagine glycans are attached at residues asparagine 35, asparagine 53, and asparagine 126. A helical membrane pass occupies residues threonine 235–tyrosine 255. At histidine 256 to lysine 261 the chain is on the cytoplasmic side.

It belongs to the LAMP family. Glycosylated.

The protein localises to the cytoplasmic vesicle membrane. It localises to the cell membrane. Its subcellular location is the cell projection. The protein resides in the dendrite. It is found in the cytoplasmic vesicle. The protein localises to the secretory vesicle. It localises to the synaptic vesicle membrane. Its subcellular location is the growth cone membrane. The protein resides in the early endosome membrane. It is found in the recycling endosome. The protein localises to the endoplasmic reticulum-Golgi intermediate compartment membrane. It localises to the endosome membrane. Plays a role in short-term synaptic plasticity in a subset of GABAergic neurons in the brain. The chain is Lysosome-associated membrane glycoprotein 5 (LAMP5) from Pongo abelii (Sumatran orangutan).